We begin with the raw amino-acid sequence, 250 residues long: Ubiquinone/menaquinone biosynthesis C-methyltransferase UbiE (250 aa).

S-adenosyl-L-methionine contacts are provided by residues threonine 73, aspartate 94, 122–123 (NA), and serine 139.

Belongs to the class I-like SAM-binding methyltransferase superfamily. MenG/UbiE family.

It carries out the reaction a 2-demethylmenaquinol + S-adenosyl-L-methionine = a menaquinol + S-adenosyl-L-homocysteine + H(+). The enzyme catalyses a 2-methoxy-6-(all-trans-polyprenyl)benzene-1,4-diol + S-adenosyl-L-methionine = a 5-methoxy-2-methyl-3-(all-trans-polyprenyl)benzene-1,4-diol + S-adenosyl-L-homocysteine + H(+). The protein operates within quinol/quinone metabolism; menaquinone biosynthesis; menaquinol from 1,4-dihydroxy-2-naphthoate: step 2/2. Its pathway is cofactor biosynthesis; ubiquinone biosynthesis. Methyltransferase required for the conversion of demethylmenaquinol (DMKH2) to menaquinol (MKH2) and the conversion of 2-polyprenyl-6-methoxy-1,4-benzoquinol (DDMQH2) to 2-polyprenyl-3-methyl-6-methoxy-1,4-benzoquinol (DMQH2). This Francisella tularensis subsp. novicida (strain U112) protein is Ubiquinone/menaquinone biosynthesis C-methyltransferase UbiE.